The following is a 460-amino-acid chain: A-type ATP synthase subunit B (460 aa).

It belongs to the ATPase alpha/beta chains family. As to quaternary structure, has multiple subunits with at least A(3), B(3), C, D, E, F, H, I and proteolipid K(x).

Its subcellular location is the cell membrane. In terms of biological role, component of the A-type ATP synthase that produces ATP from ADP in the presence of a proton gradient across the membrane. The B chain is a regulatory subunit. This is A-type ATP synthase subunit B from Thermoplasma volcanium (strain ATCC 51530 / DSM 4299 / JCM 9571 / NBRC 15438 / GSS1).